The primary structure comprises 375 residues: MESNKDEAERCISIALKAIQSNQPDRALRFLEKAQRLYPTPRVRALIESLNQKPQTAGDQPPPTDTTHATHRKAGGTDAPSANGEAGGESTKGYTAEQVAAVKRVKQCKDYYEILGVSRGASDEDLKKAYRRLALKFHPDKNHAPGATEAFKAIGTAYAVLSNPEKRKQYDQFGDDKSQAARHGHGHGDFHRGFEADISPEDLFNMFFGGGFPSSNVHVYSNGRMRYTYQQRQDRRDNQGDGGLGVFVQLMPILILILVSALSQLMVSSPPYSLSPRPSVGHIHRRVTDHLGVVYYVGDTFSEEYTGSSLKTVERNVEDDYIANLRNNCWKEKQQKEGLLYRARYFGDTDMYHRAQKMGTPSCSRLSEVQASLHG.

The residue at position 1 (methionine 1) is an N-acetylmethionine. Over 1 to 243 (MESNKDEAER…DRRDNQGDGG (243 aa)) the chain is Cytoplasmic. Residues 45–92 (ALIESLNQKPQTAGDQPPPTDTTHATHRKAGGTDAPSANGEAGGESTK) form a disordered region. A compositionally biased stretch (polar residues) spans 49 to 58 (SLNQKPQTAG). The J domain maps to 112–176 (YEILGVSRGA…RKQYDQFGDD (65 aa)). Position 185 is a pros-methylhistidine (histidine 185). Residues 244-264 (LGVFVQLMPILILILVSALSQ) traverse the membrane as a helical segment. Residues 265-375 (LMVSSPPYSL…LSEVQASLHG (111 aa)) lie on the Lumenal side of the membrane.

The protein belongs to the DnaJ family. DNAJB12/DNAJB14 subfamily. Homodimer and homotetramer. Interacts (via J domain) with HSPA8/Hsc70. Forms a multiprotein complex, at least composed of DNAJB12, DNAJB14, HSPA8/Hsc70 and SGTA; interaction with DNAJB14 and HSPA8/Hsc70 is direct. Methylated at His-185 by METTL9.

Its subcellular location is the endoplasmic reticulum membrane. The protein localises to the nucleus membrane. In terms of biological role, acts as a co-chaperone with HSPA8/Hsc70; required to promote protein folding and trafficking, prevent aggregation of client proteins, and promote unfolded proteins to endoplasmic reticulum-associated degradation (ERAD) pathway. Acts by determining HSPA8/Hsc70's ATPase and polypeptide-binding activities. Can also act independently of HSPA8/Hsc70: together with DNAJB14, acts as a chaperone that promotes maturation of potassium channels KCND2 and KCNH2 by stabilizing nascent channel subunits and assembling them into tetramers. While stabilization of nascent channel proteins is dependent on HSPA8/Hsc70, the process of oligomerization of channel subunits is independent of HSPA8/Hsc70. When overexpressed, forms membranous structures together with DNAJB14 and HSPA8/Hsc70 within the nucleus; the role of these structures, named DJANGOs, is still unclear. (Microbial infection) In case of infection by polyomavirus, involved in the virus endoplasmic reticulum membrane penetration and infection. The sequence is that of DnaJ homolog subfamily B member 12 from Homo sapiens (Human).